Consider the following 576-residue polypeptide: Arginine--tRNA ligase (576 aa).

The 'HIGH' region signature appears at 126–136; sequence ANPTGPMHIGH.

The protein belongs to the class-I aminoacyl-tRNA synthetase family. In terms of assembly, monomer.

Its subcellular location is the cytoplasm. It catalyses the reaction tRNA(Arg) + L-arginine + ATP = L-arginyl-tRNA(Arg) + AMP + diphosphate. This Rickettsia akari (strain Hartford) protein is Arginine--tRNA ligase.